A 404-amino-acid chain; its full sequence is CCA-adding enzyme (404 aa).

ATP contacts are provided by glycine 27 and arginine 30. Residues glycine 27 and arginine 30 each coordinate CTP. Aspartate 40 and aspartate 42 together coordinate Mg(2+). ATP-binding residues include arginine 111, aspartate 154, arginine 157, arginine 160, and arginine 163. CTP-binding residues include arginine 111, aspartate 154, arginine 157, arginine 160, and arginine 163.

Belongs to the tRNA nucleotidyltransferase/poly(A) polymerase family. Bacterial CCA-adding enzyme type 3 subfamily. As to quaternary structure, homodimer. Mg(2+) is required as a cofactor.

It catalyses the reaction a tRNA precursor + 2 CTP + ATP = a tRNA with a 3' CCA end + 3 diphosphate. The enzyme catalyses a tRNA with a 3' CCA end + 2 CTP + ATP = a tRNA with a 3' CCACCA end + 3 diphosphate. Catalyzes the addition and repair of the essential 3'-terminal CCA sequence in tRNAs without using a nucleic acid template. Adds these three nucleotides in the order of C, C, and A to the tRNA nucleotide-73, using CTP and ATP as substrates and producing inorganic pyrophosphate. tRNA 3'-terminal CCA addition is required both for tRNA processing and repair. Also involved in tRNA surveillance by mediating tandem CCA addition to generate a CCACCA at the 3' terminus of unstable tRNAs. While stable tRNAs receive only 3'-terminal CCA, unstable tRNAs are marked with CCACCA and rapidly degraded. The protein is CCA-adding enzyme of Geobacillus kaustophilus (strain HTA426).